The following is a 141-amino-acid chain: Nucleoside diphosphate kinase (141 aa).

Positions 9, 57, 85, 91, 102, and 112 each coordinate ATP. Residue H115 is the Pros-phosphohistidine intermediate of the active site.

This sequence belongs to the NDK family. Homotetramer. The cofactor is Mg(2+).

The protein resides in the cytoplasm. The enzyme catalyses a 2'-deoxyribonucleoside 5'-diphosphate + ATP = a 2'-deoxyribonucleoside 5'-triphosphate + ADP. It carries out the reaction a ribonucleoside 5'-diphosphate + ATP = a ribonucleoside 5'-triphosphate + ADP. Major role in the synthesis of nucleoside triphosphates other than ATP. The ATP gamma phosphate is transferred to the NDP beta phosphate via a ping-pong mechanism, using a phosphorylated active-site intermediate. The chain is Nucleoside diphosphate kinase from Chlamydia trachomatis serovar A (strain ATCC VR-571B / DSM 19440 / HAR-13).